The chain runs to 398 residues: MSDMLPLAMYALNVEPYTHTPAVLLDTPVTVRITMAAIDPEPFDEDKKPSTLRIIRRNPVYLDAGEVDEEKLIEELEGDEAAEDGDEASDDDKEEEDEDEDVDEDDEDDDEDDDGEDEYEECVVVTLSPETRCQQAIDITIAPEEDVQFLVTGSYTISLTGNYVKHPFDEPLEDLYSDEDSEEYSDDELDQEIEEDDELDHDEASSEESDEDQEFYDAISEGDEDIDEQLAKLEETSDVEAHLEDLIAKDNKKKRKQEQLDEQPETKKSKKTKDEKNTKATENEKKNKAQVLEGGVIIEDRKIGEGPKAKKGSKVGMRYIGKLKNGKVFDKNTSGKPFYFKLHRGEVIKGWDIGVTGMAIGGERRIVIPAPYAYGKQTLPGIPANSELTFDVKLVSLK.

Disordered stretches follow at residues 66–120, 164–232, and 245–288; these read EVDE…DEYE, VKHP…QLAK, and DLIA…KKNK. Over residues 170 to 228 the composition is skewed to acidic residues; that stretch reads EPLEDLYSDEDSEEYSDDELDQEIEEDDELDHDEASSEESDEDQEFYDAISEGDEDIDE. Basic and acidic residues predominate over residues 264–287; sequence PETKKSKKTKDEKNTKATENEKKN. The 87-residue stretch at 312 to 398 folds into the PPIase FKBP-type domain; it reads GSKVGMRYIG…TFDVKLVSLK (87 aa).

Belongs to the FKBP-type PPIase family. FKBP3/4 subfamily. Binds to histones H3 and H4.

It is found in the nucleus. The enzyme catalyses [protein]-peptidylproline (omega=180) = [protein]-peptidylproline (omega=0). With respect to regulation, inhibited by both FK506 and rapamycin. PPIase that acts as a histone chaperone. Histone proline isomerase that increases the rate of cis-trans isomerization at prolines on the histone H3 N-terminal tail. Proline isomerization influences H3 methylation thereby regulating gene expression. This Candida glabrata (strain ATCC 2001 / BCRC 20586 / JCM 3761 / NBRC 0622 / NRRL Y-65 / CBS 138) (Yeast) protein is FK506-binding protein 4 (FPR4).